Here is a 498-residue protein sequence, read N- to C-terminus: Lysine--tRNA ligase (498 aa).

Mg(2+) is bound by residues Glu-411 and Glu-418.

The protein belongs to the class-II aminoacyl-tRNA synthetase family. In terms of assembly, homodimer. Mg(2+) is required as a cofactor.

Its subcellular location is the cytoplasm. It carries out the reaction tRNA(Lys) + L-lysine + ATP = L-lysyl-tRNA(Lys) + AMP + diphosphate. This chain is Lysine--tRNA ligase, found in Enterococcus faecalis (strain ATCC 700802 / V583).